Reading from the N-terminus, the 261-residue chain is Sugar fermentation stimulation protein homolog (261 aa).

Residues 1-23 form a disordered region; sequence MTDSAKPQNPDPGHESRRVAPLA.

This sequence belongs to the SfsA family.

The protein is Sugar fermentation stimulation protein homolog of Syntrophobacter fumaroxidans (strain DSM 10017 / MPOB).